A 213-amino-acid polypeptide reads, in one-letter code: MNWLNSEAFVLFDQHIIWSDMVGNILGLITLALGFRRSLWTWPVQFLSGLVLFGAFYGHLTGSAGKQAVVMAVALYGWYQWNRGTDKAADGKVSVRFATWAERGAMIAAAAVGTVAVALLFKAYPSLSWDPWPDAYIFVGTIVAMYAQARGMVEFWFAWLLVDLVGVPLNFANGYAFSGFVYVIYGALVLWGMRDWWLRSRRDSRPVLEGAPA.

5 helical membrane-spanning segments follow: residues 15–35 (HIIW…ALGF), 38–58 (SLWT…AFYG), 107–129 (IAAA…SLSW), 136–158 (YIFV…FWFA), and 171–193 (FANG…LWGM).

This sequence belongs to the nicotinamide ribonucleoside (NR) uptake permease (TC 4.B.1) family.

Its subcellular location is the cell membrane. Its function is as follows. Transports riboflavin and roseoflavin. Can also transport FMN and FAD. May confer roseoflavin resistance to S.davawensis, which naturally produces this antibiotic during stationary growth phase. The sequence is that of Riboflavin/roseoflavin transporter RibM from Streptomyces davaonensis (strain DSM 101723 / JCM 4913 / KCC S-0913 / 768).